Consider the following 617-residue polypeptide: D-glucuronyl C5-epimerase (617 aa).

The Cytoplasmic segment spans residues 1–11 (MRCLAARVNYK). A helical; Signal-anchor for type II membrane protein membrane pass occupies residues 12–28 (TLIIICALFTLVTVLLW). The Lumenal segment spans residues 29–617 (NKCSSDKAIQ…YLKGSRAKHN (589 aa)). Residues Y179, 184 to 186 (RDR), Q201, Y209, Q212, and Q215 contribute to the substrate site. Ca(2+)-binding residues include T237, E239, T268, N269, and D392. Substrate-binding positions include 429–432 (KLGE), 499–500 (EY), N510, Y514, Y560, R563, and 572–581 (NLARWDYHTT).

Belongs to the D-glucuronyl C5-epimerase family. As to quaternary structure, homodimer. Interacts with HS2ST1.

The protein localises to the golgi apparatus membrane. It catalyses the reaction [heparosan-N-sulfate](n) = [heparan-N-sulfate](n). Its pathway is glycan metabolism; heparan sulfate biosynthesis. It participates in glycan metabolism; heparin biosynthesis. Its function is as follows. Converts D-glucuronic acid residues adjacent to N-sulfate sugar residues to L-iduronic acid residues, both in maturing heparan sulfate (HS) and heparin chains. This is important for further modifications that determine the specificity of interactions between these glycosaminoglycans and proteins. In Bos taurus (Bovine), this protein is D-glucuronyl C5-epimerase (GLCE).